A 440-amino-acid polypeptide reads, in one-letter code: Endoglucanase B (440 aa).

The signal sequence occupies residues 1 to 33 (MNKRLSRGKISLLASVFVTTTFMGGVNVLASTA). Glutamate 179 serves as the catalytic Proton donor. Glutamate 305 functions as the Nucleophile in the catalytic mechanism. Residues 381 to 440 (TSYSLGDVNKDGKVNAIDYAVLKSILLGTNTNVDLSVSDMNKDGKVNALDLAVLKKMLLS) enclose the Dockerin domain.

It belongs to the glycosyl hydrolase 5 (cellulase A) family.

The catalysed reaction is Endohydrolysis of (1-&gt;4)-beta-D-glucosidic linkages in cellulose, lichenin and cereal beta-D-glucans.. It catalyses the reaction Endohydrolysis of (1-&gt;4)-beta-D-xylosidic linkages in xylans.. Its function is as follows. Has endoglucanase activity on carboxymethyl-cellulose (CMC), xylan and lichenan, but not Avicel. This is Endoglucanase B (engB) from Clostridium cellulovorans (strain ATCC 35296 / DSM 3052 / OCM 3 / 743B).